A 1007-amino-acid polypeptide reads, in one-letter code: Serine/threonine-protein kinase atg1 (1007 aa).

The region spanning 30–336 is the Protein kinase domain; it reads YTRLSEIGRG…FDVYFAHKVL (307 aa). Residues 36–44 and Lys59 each bind ATP; that span reads IGRGSFAVV. Asp174 serves as the catalytic Proton acceptor. Disordered stretches follow at residues 343–489, 524–586, 795–817, and 878–900; these read LVAD…KEHA, GGQA…PTSA, RLPS…GSGT, and SRPG…DGGQ. The span at 373–387 shows a compositional bias: basic and acidic residues; that stretch reads MKRENALSGGVRDEP. Residues 396 to 410 show a composition bias toward polar residues; sequence AMTQSPRPETPSTPM. Positions 477-489 are enriched in basic and acidic residues; it reads KPVEKAKDEKEHA. A compositionally biased stretch (low complexity) spans 534-555; the sequence is SGAAPGTPPAGGSSPHASPSKA. Residues 563–579 show a composition bias toward basic and acidic residues; sequence SRADSAHVRQNSYDRRY. Residues 805 to 817 are compositionally biased toward low complexity; that stretch reads SNLSVGSSLGSGT. The segment covering 887–896 has biased composition (basic and acidic residues); sequence DRADARRDNE.

Belongs to the protein kinase superfamily. Ser/Thr protein kinase family. APG1/unc-51/ULK1 subfamily. Homodimer. Forms a ternary complex with ATG13 and ATG17.

The protein resides in the cytoplasm. It is found in the preautophagosomal structure membrane. It catalyses the reaction L-seryl-[protein] + ATP = O-phospho-L-seryl-[protein] + ADP + H(+). It carries out the reaction L-threonyl-[protein] + ATP = O-phospho-L-threonyl-[protein] + ADP + H(+). Functionally, serine/threonine protein kinase involved in the cytoplasm to vacuole transport (Cvt) and found to be essential in autophagy, where it is required for the formation of autophagosomes. Involved in the clearance of protein aggregates which cannot be efficiently cleared by the proteasome. Required for selective autophagic degradation of the nucleus (nucleophagy) as well as for mitophagy which contributes to regulate mitochondrial quantity and quality by eliminating the mitochondria to a basal level to fulfill cellular energy requirements and preventing excess ROS production. Also involved in endoplasmic reticulum-specific autophagic process, in selective removal of ER-associated degradation (ERAD) substrates. Plays a key role in ATG9 and ATG23 cycling through the pre-autophagosomal structure and is necessary to promote ATG18 binding to ATG9 through phosphorylation of ATG9. Catalyzes phosphorylation of ATG4, decreasing the interaction between ATG4 and ATG8 and impairing deconjugation of PE-conjugated forms of ATG8. The protein is Serine/threonine-protein kinase atg1 of Aspergillus niger (strain ATCC MYA-4892 / CBS 513.88 / FGSC A1513).